A 187-amino-acid polypeptide reads, in one-letter code: Pyridoxal 5'-phosphate synthase subunit PdxT (187 aa).

L-glutamine is bound at residue 47–49 (GES). Cys-76 functions as the Nucleophile in the catalytic mechanism. Residues Arg-102 and 128–129 (IR) contribute to the L-glutamine site. Catalysis depends on charge relay system residues His-165 and Glu-167.

This sequence belongs to the glutaminase PdxT/SNO family. As to quaternary structure, in the presence of PdxS, forms a dodecamer of heterodimers. Only shows activity in the heterodimer.

The enzyme catalyses aldehydo-D-ribose 5-phosphate + D-glyceraldehyde 3-phosphate + L-glutamine = pyridoxal 5'-phosphate + L-glutamate + phosphate + 3 H2O + H(+). The catalysed reaction is L-glutamine + H2O = L-glutamate + NH4(+). The protein operates within cofactor biosynthesis; pyridoxal 5'-phosphate biosynthesis. In terms of biological role, catalyzes the hydrolysis of glutamine to glutamate and ammonia as part of the biosynthesis of pyridoxal 5'-phosphate. The resulting ammonia molecule is channeled to the active site of PdxS. This Methanococcus maripaludis (strain C5 / ATCC BAA-1333) protein is Pyridoxal 5'-phosphate synthase subunit PdxT.